Here is an 834-residue protein sequence, read N- to C-terminus: DIS3-like exonuclease 2 (834 aa).

Polar residues predominate over residues 1 to 23; the sequence is MHNSEFLSPVQSGTQRGTNRSIL. The interval 1–35 is disordered; that stretch reads MHNSEFLSPVQSGTQRGTNRSILNNKKSGKGKKKS. Residues Asp354 and Asp363 each coordinate Mg(2+).

Belongs to the RNR ribonuclease family. DIS3L2 subfamily. Mg(2+) serves as cofactor. It depends on Mn(2+) as a cofactor.

The protein localises to the cytoplasm. It localises to the P-body. Its function is as follows. 3'-5'-exoribonuclease that specifically recognizes RNAs polyuridylated at their 3' end and mediates their degradation. Component of an exosome-independent RNA degradation pathway that mediates degradation of both mRNAs and miRNAs that have been polyuridylated by a terminal uridylyltransferase. Essential for correct mitosis, and negatively regulates cell proliferation. The chain is DIS3-like exonuclease 2 from Xenopus tropicalis (Western clawed frog).